Here is a 256-residue protein sequence, read N- to C-terminus: DNA repair protein RecO (256 aa).

It belongs to the RecO family.

In terms of biological role, involved in DNA repair and RecF pathway recombination. The protein is DNA repair protein RecO of Shouchella clausii (strain KSM-K16) (Alkalihalobacillus clausii).